The primary structure comprises 412 residues: BURP domain-containing protein 13 (412 aa).

The N-terminal stretch at 1-23 is a signal peptide; that stretch reads MARFLLLLVAVAAAAAVLSLGDA. The 217-residue stretch at 190–406 folds into the BURP domain; it reads FFHEEAVRVG…PYGHIVWAKN (217 aa). Asparagine 369 carries an N-linked (GlcNAc...) asparagine glycan.

Specifically expressed in anthers, in the tapetum and microspores (at protein level).

Required for pollen development. Probably synthesized in the tapetum, packaged in Ubisch bodies and transported at appropriate stages to the micropsores. This chain is BURP domain-containing protein 13 (BURP13), found in Oryza sativa subsp. japonica (Rice).